A 251-amino-acid chain; its full sequence is tRNA pseudouridine synthase A (251 aa).

Asp54 serves as the catalytic Nucleophile. Tyr111 contributes to the substrate binding site.

It belongs to the tRNA pseudouridine synthase TruA family. In terms of assembly, homodimer.

The enzyme catalyses uridine(38/39/40) in tRNA = pseudouridine(38/39/40) in tRNA. In terms of biological role, formation of pseudouridine at positions 38, 39 and 40 in the anticodon stem and loop of transfer RNAs. This chain is tRNA pseudouridine synthase A, found in Mycoplasma mycoides subsp. mycoides SC (strain CCUG 32753 / NCTC 10114 / PG1).